An 898-amino-acid chain; its full sequence is Phosphoenolpyruvate carboxylase (898 aa).

Active-site residues include H138 and K561.

It belongs to the PEPCase type 1 family. The cofactor is Mg(2+).

The catalysed reaction is oxaloacetate + phosphate = phosphoenolpyruvate + hydrogencarbonate. Forms oxaloacetate, a four-carbon dicarboxylic acid source for the tricarboxylic acid cycle. This chain is Phosphoenolpyruvate carboxylase, found in Streptococcus suis (strain 98HAH33).